The sequence spans 727 residues: Polyribonucleotide nucleotidyltransferase (727 aa).

Residues aspartate 488 and aspartate 494 each coordinate Mg(2+). The region spanning 555-614 (PKLYTMKINPEKIRDVIGKGGATIRALTDETGCQINIEEDGTITIAATEAAKADEAKRRI) is the KH domain. The 69-residue stretch at 624 to 692 (GKVYEGPVTK…DKGRVKLSMK (69 aa)) folds into the S1 motif domain. Positions 691 to 727 (MKALADRPAGDSGRPAPAERGERRERRDGGASEQQQQ) are disordered. A compositionally biased stretch (basic and acidic residues) spans 707–720 (PAERGERRERRDGG).

The protein belongs to the polyribonucleotide nucleotidyltransferase family. The cofactor is Mg(2+).

The protein resides in the cytoplasm. The catalysed reaction is RNA(n+1) + phosphate = RNA(n) + a ribonucleoside 5'-diphosphate. Its function is as follows. Involved in mRNA degradation. Catalyzes the phosphorolysis of single-stranded polyribonucleotides processively in the 3'- to 5'-direction. This chain is Polyribonucleotide nucleotidyltransferase, found in Acidovorax ebreus (strain TPSY) (Diaphorobacter sp. (strain TPSY)).